Consider the following 322-residue polypeptide: Acetylglutamate kinase (322 aa).

Substrate contacts are provided by residues G89 to G90, R111, and N217.

Belongs to the acetylglutamate kinase family. ArgB subfamily.

The protein resides in the cytoplasm. The catalysed reaction is N-acetyl-L-glutamate + ATP = N-acetyl-L-glutamyl 5-phosphate + ADP. Its pathway is amino-acid biosynthesis; L-arginine biosynthesis; N(2)-acetyl-L-ornithine from L-glutamate: step 2/4. Its function is as follows. Catalyzes the ATP-dependent phosphorylation of N-acetyl-L-glutamate. This Ehrlichia ruminantium (strain Welgevonden) protein is Acetylglutamate kinase.